The chain runs to 333 residues: DnaJ homolog subfamily C member 25 homolog (333 aa).

A helical membrane pass occupies residues 8-28 (LVLLALLPTMALGLLEGLYCG). The 69-residue stretch at 31-99 (NCYDVLGVTR…ESRTDYDYML (69 aa)) folds into the J domain. The chain crosses the membrane as a helical span at residues 123-143 (VRVVIVVVLTIVSVIQYYSGW). The stretch at 158–208 (KYRNQALEIARDEIQEKIQKKGKNRMSKNDQRDELERIIRRVIEEKMDVKG) forms a coiled coil. A helical transmembrane segment spans residues 218-238 (VLWVQLIICPYTILSFIVWHA).

The protein belongs to the DNAJC25 family.

The protein resides in the membrane. This is DnaJ homolog subfamily C member 25 homolog from Drosophila melanogaster (Fruit fly).